The primary structure comprises 802 residues: Ribosomal protein S6 kinase alpha-5 (802 aa).

A compositionally biased stretch (gly residues) spans 1–22 (MEEEGGSSGGAAGTSADGGDGG). The segment at 1–23 (MEEEGGSSGGAAGTSADGGDGGE) is disordered. One can recognise a Protein kinase 1 domain in the interval 49-318 (FELLKVLGTG…ADEIKEHLFF (270 aa)). ATP-binding positions include 55–63 (LGTGAYGKV) and lysine 81. The active-site Proton acceptor is the aspartate 177. A Phosphoserine; by autocatalysis modification is found at serine 212. The AGC-kinase C-terminal domain occupies 319 to 387 (QKINWDDLAA…VAPSILFKRN (69 aa)). Serine 360 carries the post-translational modification Phosphoserine; by MAPK1, MAPK3 and MAPK14. 2 positions are modified to phosphoserine; by autocatalysis: serine 376 and serine 381. The region spanning 426–687 (DLKDKPLGEG…MSGLRYNEWL (262 aa)) is the Protein kinase 2 domain. ATP contacts are provided by residues 432–440 (LGEGSFSIC) and lysine 455. Aspartate 544 functions as the Proton acceptor in the catalytic mechanism. Position 581 is a phosphothreonine; by MAPK1, MAPK3 and MAPK14 (threonine 581). 4 positions are modified to phosphoserine: serine 647, serine 657, serine 691, and serine 695. Threonine 700 is subject to Phosphothreonine; by MAPK1, MAPK3 and MAPK14. Residues 741 to 802 (AKRRKMKKTS…TLFQFSDSVA (62 aa)) are disordered. Residues 749 to 779 (TSTSTETRSSSSESSHSSSSHSHGKTTPTKT) are compositionally biased toward low complexity. Residues serine 750, serine 752, and serine 758 each carry the phosphoserine; by autocatalysis modification. The segment covering 780 to 802 (LQPSNPADSNNPETLFQFSDSVA) has biased composition (polar residues). Serine 798 is subject to Phosphoserine.

It belongs to the protein kinase superfamily. AGC Ser/Thr protein kinase family. S6 kinase subfamily. As to quaternary structure, forms a complex with either MAPK1/ERK2 or MAPK3/ERK1 in quiescent cells which transiently dissociates following mitogenic stimulation. Also associates with MAPK14/p38-alpha. Activated RPS6KA5 associates with and phosphorylates the NF-kappa-B p65 subunit RELA. Interacts with CREBBP and EP300. Mg(2+) serves as cofactor. In terms of processing, ser-376 and Thr-581 phosphorylation is required for kinase activity. Ser-376 and Ser-212 are autophosphorylated by the C-terminal kinase domain, and their phosphorylation is essential for the catalytic activity of the N-terminal kinase domain. Phosphorylated at Ser-360, Thr-581 and Thr-700 by MAPK1/ERK2, MAPK3/ERK1 and MAPK14/p38-alpha. Autophosphorylated at Ser-750, Ser-752 and Ser-758 by the N-terminal kinase domain. Ubiquitinated.

It localises to the nucleus. It catalyses the reaction L-seryl-[protein] + ATP = O-phospho-L-seryl-[protein] + ADP + H(+). The catalysed reaction is L-threonyl-[protein] + ATP = O-phospho-L-threonyl-[protein] + ADP + H(+). With respect to regulation, activated by phosphorylation at Ser-360, Thr-581 and Thr-700 by MAPK1/ERK2, MAPK3/ERK1 and MAPK14/p38-alpha, and by further autophosphorylation of Ser-212, Ser-376 and Ser-381 by the activated C-terminal kinase domain. The active N-terminal kinase domain finally phosphorylates downstream substrates, as well as Ser-750, Ser-752 and Ser-758 in its own C-terminal region. In terms of biological role, serine/threonine-protein kinase that is required for the mitogen or stress-induced phosphorylation of the transcription factors CREB1 and ATF1 and for the regulation of the transcription factors RELA, STAT3 and ETV1/ER81, and that contributes to gene activation by histone phosphorylation and functions in the regulation of inflammatory genes. Phosphorylates CREB1 and ATF1 in response to mitogenic or stress stimuli such as UV-C irradiation, epidermal growth factor (EGF) and anisomycin. Plays an essential role in the control of RELA transcriptional activity in response to TNF and upon glucocorticoid, associates in the cytoplasm with the glucocorticoid receptor NR3C1 and contributes to RELA inhibition and repression of inflammatory gene expression. In skeletal myoblasts is required for phosphorylation of RELA at 'Ser-276' during oxidative stress. In erythropoietin-stimulated cells, is necessary for the 'Ser-727' phosphorylation of STAT3 and regulation of its transcriptional potential. Phosphorylates ETV1/ER81 at 'Ser-191' and 'Ser-216', and thereby regulates its ability to stimulate transcription, which may be important during development and breast tumor formation. Directly represses transcription via phosphorylation of 'Ser-1' of histone H2A. Phosphorylates 'Ser-10' of histone H3 in response to mitogenics, stress stimuli and EGF, which results in the transcriptional activation of several immediate early genes, including proto-oncogenes c-fos/FOS and c-jun/JUN. May also phosphorylate 'Ser-28' of histone H3. Mediates the mitogen- and stress-induced phosphorylation of high mobility group protein 1 (HMGN1/HMG14). In lipopolysaccharide-stimulated primary macrophages, acts downstream of the Toll-like receptor TLR4 to limit the production of pro-inflammatory cytokines. Functions probably by inducing transcription of the MAP kinase phosphatase DUSP1 and the anti-inflammatory cytokine interleukin 10 (IL10), via CREB1 and ATF1 transcription factors. Plays a role in neuronal cell death by mediating the downstream effects of excitotoxic injury. Phosphorylates TRIM7 at 'Ser-107' in response to growth factor signaling via the MEK/ERK pathway, thereby stimulating its ubiquitin ligase activity. This Pongo abelii (Sumatran orangutan) protein is Ribosomal protein S6 kinase alpha-5 (RPS6KA5).